We begin with the raw amino-acid sequence, 217 residues long: Large ribosomal subunit protein uL29m (217 aa).

Belongs to the universal ribosomal protein uL29 family. In terms of assembly, component of the mitochondrial large ribosomal subunit. Mature mitochondrial ribosomes consist of a small (37S) and a large (54S) subunit. The 37S subunit contains at least 33 different proteins and 1 molecule of RNA (15S). The 54S subunit contains at least 45 different proteins and 1 molecule of RNA (21S).

It is found in the mitochondrion. This Aspergillus fumigatus (strain ATCC MYA-4609 / CBS 101355 / FGSC A1100 / Af293) (Neosartorya fumigata) protein is Large ribosomal subunit protein uL29m (mrpl4).